A 254-amino-acid chain; its full sequence is Diphthine synthase (254 aa).

S-adenosyl-L-methionine contacts are provided by residues L11, D86, I89, 114 to 115 (SV), L166, L207, and H232.

It belongs to the diphthine synthase family. Homodimer.

It carries out the reaction 2-[(3S)-amino-3-carboxypropyl]-L-histidyl-[translation elongation factor 2] + 3 S-adenosyl-L-methionine = diphthine-[translation elongation factor 2] + 3 S-adenosyl-L-homocysteine + 3 H(+). It participates in protein modification; peptidyl-diphthamide biosynthesis. S-adenosyl-L-methionine-dependent methyltransferase that catalyzes the trimethylation of the amino group of the modified target histidine residue in translation elongation factor 2 (EF-2), to form an intermediate called diphthine. The three successive methylation reactions represent the second step of diphthamide biosynthesis. This chain is Diphthine synthase, found in Sulfurisphaera tokodaii (strain DSM 16993 / JCM 10545 / NBRC 100140 / 7) (Sulfolobus tokodaii).